Consider the following 477-residue polypeptide: UDP-N-acetylmuramate--L-alanine ligase (477 aa).

An ATP-binding site is contributed by 117–123; that stretch reads GTHGKTT.

It belongs to the MurCDEF family.

Its subcellular location is the cytoplasm. It carries out the reaction UDP-N-acetyl-alpha-D-muramate + L-alanine + ATP = UDP-N-acetyl-alpha-D-muramoyl-L-alanine + ADP + phosphate + H(+). It participates in cell wall biogenesis; peptidoglycan biosynthesis. In terms of biological role, cell wall formation. This is UDP-N-acetylmuramate--L-alanine ligase from Phenylobacterium zucineum (strain HLK1).